We begin with the raw amino-acid sequence, 275 residues long: NH(3)-dependent NAD(+) synthetase (275 aa).

Residue 46–53 (GISGGQDS) participates in ATP binding. D52 provides a ligand contact to Mg(2+). R140 contacts deamido-NAD(+). Residue T160 participates in ATP binding. E165 provides a ligand contact to Mg(2+). Deamido-NAD(+) is bound by residues K173 and D180. ATP is bound by residues K189 and T211. A deamido-NAD(+)-binding site is contributed by 260–261 (HK).

The protein belongs to the NAD synthetase family. Homodimer.

The enzyme catalyses deamido-NAD(+) + NH4(+) + ATP = AMP + diphosphate + NAD(+) + H(+). It functions in the pathway cofactor biosynthesis; NAD(+) biosynthesis; NAD(+) from deamido-NAD(+) (ammonia route): step 1/1. Its function is as follows. Catalyzes the ATP-dependent amidation of deamido-NAD to form NAD. Uses ammonia as a nitrogen source. This Escherichia coli O7:K1 (strain IAI39 / ExPEC) protein is NH(3)-dependent NAD(+) synthetase.